The sequence spans 265 residues: MAARMAFADKPNHFINFPLAQFSGFMGKYLKLQSQLVEMGLDCKLQKVPHVSITLLDIKADQYKQVEFAIQEIIDDLAAYEGDIVFDNPHMLGRCLVLDVKGFEELHEDIVEILRRRGCTADQSRQWIPHCTVAQFDEEKEIKEMQFYFKLPFYLKHNNLLTDARLELVKIGSSKVGGFYCSELSIWCGERLCYKPPTPKFSDIFGYCCIDKIRGDLEIGDLPPDDEEAWAELSYHYQRNTYFFRHVHDNSIYFRTVCRMKGCMC.

This sequence belongs to the coronaviruses ns2a protein family.

The protein resides in the host cytoplasm. Its function is as follows. Not essential for virus replication in transformed murine cells. The chain is Non-structural protein 2a from Mus musculus (Mouse).